A 561-amino-acid chain; its full sequence is Transcription factor Clamp (561 aa).

The C2H2-type 1 zinc-finger motif lies at 127–149; sequence FKCDVCSDMFPHLALLNAHKRMH. Zn(2+) contacts are provided by C129, C132, H145, and H149. A disordered region spans residues 290–315; that stretch reads TGGTTPKREASSGSGHHPVKKRNSQQ. C2H2-type zinc fingers lie at residues 360 to 382, 388 to 410, 416 to 438, 444 to 466, 472 to 494, and 500 to 522; these read FSCN…KKLH, YKCS…ARIH, YKCQ…ERTH, YVCG…RRIH, YKCE…AKVH, and YKCE…RGIH.

As to quaternary structure, homodimer. Interacts with msl-2; promoting recruitment of the male-specific lethal (MSL) histone acetyltransferase complex to chromatin. Interacts with Nelf-A. Interacts with NELF-B.

It is found in the nucleus. It localises to the chromosome. Functionally, transcription factor involved in X-chromosome dosage compensation in males, the process by which transcription of the single X chromosome in the male is elevated. Binds to the DNA sequence (GA)n. Clamp-binding promotes nucleosome depletion and chromatin accessibility, thereby allowing access to other transcription factors. Specifically binds to cis-acting elements on the X-chromosome named chromatin entry sites and promotes recruitment of the male-specific lethal (MSL) histone acetyltransferase complex, which associates with actively transcribed genes on the male X-chromosome to upregulate their expression. Mechanistically, acts by promoting chromatin accessibility at chromatin entry sites, facilitating DNA-binding of msl-2, followed by MSL complex recruitment. In addition to dosage compensation, also involved in zygotic genome activation (ZGA), a critical event in early embryonic development during which the developmental control passes from maternally provided mRNAs to the expression of the zygotic genome after fertilization. Maternally-provided protein cooperates with Zelda (zld) to activate zygotic transcription by increasing chromatin accessibility at promoters of specific genes and facilitate zld occupancy at a subset of key embryonic promoters. Also acts as an activator of gypsy chromatin insulator function by promoting binding of Cp190 to chromatin. This Drosophila melanogaster (Fruit fly) protein is Transcription factor Clamp.